A 284-amino-acid polypeptide reads, in one-letter code: Pantothenate synthetase (284 aa).

Residue 30–37 coordinates ATP; it reads MGALHEGH. Catalysis depends on H37, which acts as the Proton donor. Residue Q61 coordinates (R)-pantoate. Q61 is a beta-alanine binding site. An ATP-binding site is contributed by 147–150; that stretch reads GEKD. Q153 provides a ligand contact to (R)-pantoate. ATP contacts are provided by residues V176 and 184–187; that span reads TSSR.

This sequence belongs to the pantothenate synthetase family. In terms of assembly, homodimer.

The protein resides in the cytoplasm. The enzyme catalyses (R)-pantoate + beta-alanine + ATP = (R)-pantothenate + AMP + diphosphate + H(+). It participates in cofactor biosynthesis; (R)-pantothenate biosynthesis; (R)-pantothenate from (R)-pantoate and beta-alanine: step 1/1. Its function is as follows. Catalyzes the condensation of pantoate with beta-alanine in an ATP-dependent reaction via a pantoyl-adenylate intermediate. This chain is Pantothenate synthetase, found in Chlorobaculum tepidum (strain ATCC 49652 / DSM 12025 / NBRC 103806 / TLS) (Chlorobium tepidum).